The following is a 448-amino-acid chain: tRNA(Ile)-lysidine synthase (448 aa).

25-30 lines the ATP pocket; sequence SGGSDS.

This sequence belongs to the tRNA(Ile)-lysidine synthase family.

It is found in the cytoplasm. The enzyme catalyses cytidine(34) in tRNA(Ile2) + L-lysine + ATP = lysidine(34) in tRNA(Ile2) + AMP + diphosphate + H(+). Ligates lysine onto the cytidine present at position 34 of the AUA codon-specific tRNA(Ile) that contains the anticodon CAU, in an ATP-dependent manner. Cytidine is converted to lysidine, thus changing the amino acid specificity of the tRNA from methionine to isoleucine. The polypeptide is tRNA(Ile)-lysidine synthase (Brucella abortus (strain S19)).